The chain runs to 1093 residues: GPI ethanolamine phosphate transferase 3, catalytic subunit (1093 aa).

A helical transmembrane segment spans residues 4–24 (VSVLLFLAWVCFLFYAGIALF). A glycan (N-linked (GlcNAc...) asparagine) is linked at N268. Helical transmembrane passes span 460–480 (AAAC…GFLF), 483–503 (LLLI…GVSV), 512–532 (VVLG…KAWV), 669–689 (LWYG…RLWL), 702–722 (VLFV…YWAL), 748–768 (VMGL…TVLV), 831–851 (SVYS…LMLL), 856–876 (VSLV…LLAA), and 945–965 (FASH…PFLC). Residues 971-991 (KRRQPLPGSESEARVRPEEEE) are disordered. 2 helical membrane passes run 1018–1038 (LKYL…ASIL) and 1052–1072 (FIFE…GIAL).

Belongs to the PIGG/PIGN/PIGO family. PIGO subfamily. As to quaternary structure, forms the ethanolamine phosphate transferase 3 complex composed by PIGO and PIGF. PIGF is required to stabilize PIGO.

It localises to the endoplasmic reticulum membrane. The protein operates within glycolipid biosynthesis; glycosylphosphatidylinositol-anchor biosynthesis. Catalytic subunit of the ethanolamine phosphate transferase 3 complex that transfers an ethanolamine phosphate (EtNP) from a phosphatidylethanolamine (PE) to the 6-OH position of the third alpha-1,2-linked mannose of the an alpha-D-Man-(1-&gt;2)-alpha-D-Man-(1-&gt;6)-2-PEtn-alpha-D-Man-(1-&gt;4)-alpha-D-GlcN-(1-&gt;6)-(1-radyl,2-acyl-sn-glycero-3-phospho)-2-acyl-inositol (also termed H6) intermediate to generate a 6-PEtn-alpha-D-Man-(1-&gt;2)-alpha-D-Man-(1-&gt;6)-2-PEtn-alpha-D-Man-(1-&gt;4)-alpha-D-GlcN-(1-&gt;6)-(1-radyl,2-acyl-sn-glycero-3-phospho)-2-acyl-inositol (also termed H7) and participates in the tenth step of the glycosylphosphatidylinositol-anchor biosynthesis. This Mus musculus (Mouse) protein is GPI ethanolamine phosphate transferase 3, catalytic subunit.